The sequence spans 259 residues: NAD kinase (259 aa).

Asp-49 (proton acceptor) is an active-site residue. NAD(+) contacts are provided by residues 49 to 50 (DG), Arg-54, 118 to 119 (NE), Asp-148, Ala-156, 159 to 164 (TAYNYS), and Ala-183.

This sequence belongs to the NAD kinase family. A divalent metal cation serves as cofactor.

Its subcellular location is the cytoplasm. The catalysed reaction is NAD(+) + ATP = ADP + NADP(+) + H(+). Its function is as follows. Involved in the regulation of the intracellular balance of NAD and NADP, and is a key enzyme in the biosynthesis of NADP. Catalyzes specifically the phosphorylation on 2'-hydroxyl of the adenosine moiety of NAD to yield NADP. The chain is NAD kinase from Xylella fastidiosa (strain 9a5c).